The chain runs to 298 residues: ATP synthase gamma chain (298 aa).

It belongs to the ATPase gamma chain family. As to quaternary structure, F-type ATPases have 2 components, CF(1) - the catalytic core - and CF(0) - the membrane proton channel. CF(1) has five subunits: alpha(3), beta(3), gamma(1), delta(1), epsilon(1). CF(0) has three main subunits: a, b and c.

It localises to the cell inner membrane. Functionally, produces ATP from ADP in the presence of a proton gradient across the membrane. The gamma chain is believed to be important in regulating ATPase activity and the flow of protons through the CF(0) complex. The polypeptide is ATP synthase gamma chain (Francisella tularensis subsp. holarctica (strain LVS)).